Consider the following 309-residue polypeptide: Aspartate carbamoyltransferase catalytic subunit (309 aa).

Carbamoyl phosphate-binding residues include R55 and T56. Residue K85 coordinates L-aspartate. Residues R106, H135, and Q138 each coordinate carbamoyl phosphate. Positions 168 and 230 each coordinate L-aspartate. Carbamoyl phosphate is bound by residues L268 and P269.

Belongs to the aspartate/ornithine carbamoyltransferase superfamily. ATCase family. In terms of assembly, heterododecamer (2C3:3R2) of six catalytic PyrB chains organized as two trimers (C3), and six regulatory PyrI chains organized as three dimers (R2).

The enzyme catalyses carbamoyl phosphate + L-aspartate = N-carbamoyl-L-aspartate + phosphate + H(+). The protein operates within pyrimidine metabolism; UMP biosynthesis via de novo pathway; (S)-dihydroorotate from bicarbonate: step 2/3. Catalyzes the condensation of carbamoyl phosphate and aspartate to form carbamoyl aspartate and inorganic phosphate, the committed step in the de novo pyrimidine nucleotide biosynthesis pathway. In Aliivibrio salmonicida (strain LFI1238) (Vibrio salmonicida (strain LFI1238)), this protein is Aspartate carbamoyltransferase catalytic subunit.